The following is a 486-amino-acid chain: Small ribosomal subunit protein uS4m (486 aa).

The S4 RNA-binding domain maps to 103 to 172 (KRLDFALFRA…AKKPSFQEAL (70 aa)).

The protein belongs to the universal ribosomal protein uS4 family. In terms of assembly, component of the mitochondrial small ribosomal subunit (mt-SSU). Mature yeast 74S mitochondrial ribosomes consist of a small (37S) and a large (54S) subunit. The 37S small subunit contains a 15S ribosomal RNA (15S mt-rRNA) and 34 different proteins. The 54S large subunit contains a 21S rRNA (21S mt-rRNA) and 46 different proteins. uS3m, uS4m and uS5m form the narrow entry site of the mRNA channel.

The protein resides in the mitochondrion. In terms of biological role, component of the mitochondrial ribosome (mitoribosome), a dedicated translation machinery responsible for the synthesis of mitochondrial genome-encoded proteins, including at least some of the essential transmembrane subunits of the mitochondrial respiratory chain. The mitoribosomes are attached to the mitochondrial inner membrane and translation products are cotranslationally integrated into the membrane. This chain is Small ribosomal subunit protein uS4m (NAM9), found in Saccharomyces cerevisiae (strain ATCC 204508 / S288c) (Baker's yeast).